We begin with the raw amino-acid sequence, 113 residues long: uncharacterized protein (113 aa).

The N-terminal stretch at 1–19 is a signal peptide; it reads MLSPLSPRIIAAFTTAVGA.

It to M.tuberculosis Rv1291c.

This is an uncharacterized protein from Mycobacterium tuberculosis (strain CDC 1551 / Oshkosh).